A 163-amino-acid polypeptide reads, in one-letter code: ADP-ribosylation factor-like protein 2-binding protein (163 aa).

Belongs to the ARL2BP family. In terms of assembly, found in a complex with ARL2BP, ARL2 and SLC25A6. Found in a complex with ARL2, ARL2BP and SLC25A4. Interacts with STAT2, STAT3 and STAT4. Interacts with GTP-bound ARL2 and ARL3; the complex ARL2-ARL2BP as well as ARL2BP alone, binds to SLC25A4. Interaction with ARL2 may be required for targeting to cilia basal body. Interacts with STAT3; interaction is enhanced with ARL2. In terms of tissue distribution, expressed in retina pigment epithelial cells (at protein level). Widely expressed.

Its subcellular location is the cytoplasm. The protein localises to the mitochondrion intermembrane space. The protein resides in the cytoskeleton. It localises to the microtubule organizing center. It is found in the centrosome. Its subcellular location is the nucleus. The protein localises to the spindle. The protein resides in the cilium basal body. Its function is as follows. Together with ARL2, plays a role in the nuclear translocation, retention and transcriptional activity of STAT3. May play a role as an effector of ARL2. The chain is ADP-ribosylation factor-like protein 2-binding protein (ARL2BP) from Homo sapiens (Human).